We begin with the raw amino-acid sequence, 706 residues long: Serotransferrin (706 aa).

An N-terminal signal peptide occupies residues 1–19; it reads MRLAIRALLACAVLGLCLA. 2 Transferrin-like domains span residues 23–349 and 363–691; these read VRWC…NLRE and VKWC…NLRQ. Cystine bridges form between Cys-26/Cys-64 and Cys-36/Cys-55. Arg-40 carries the post-translational modification Dimethylated arginine. Fe(3+) contacts are provided by Asp-79 and Tyr-111. Intrachain disulfides connect Cys-134–Cys-215, Cys-174–Cys-190, Cys-177–Cys-198, Cys-187–Cys-200, and Cys-248–Cys-262. Thr-136, Arg-140, Ala-142, and Gly-143 together coordinate hydrogencarbonate. Tyr-209 is a binding site for Fe(3+). His-270 is a binding site for Fe(3+). 11 cysteine pairs are disulfide-bonded: Cys-360–Cys-623, Cys-366–Cys-398, Cys-376–Cys-389, Cys-423–Cys-701, Cys-441–Cys-664, Cys-474–Cys-550, Cys-498–Cys-692, Cys-508–Cys-522, Cys-519–Cys-533, Cys-590–Cys-604, and Cys-642–Cys-647. Ser-391 carries the phosphoserine modification. Positions 413 and 449 each coordinate Fe(3+). Residues Thr-476, Arg-480, Ala-482, and Gly-483 each contribute to the hydrogencarbonate site. Residue Asn-515 is glycosylated (N-linked (GlcNAc...) asparagine). Tyr-544 lines the Fe(3+) pocket. His-612 contributes to the Fe(3+) binding site. Ser-693 is modified (phosphoserine).

This sequence belongs to the transferrin family. Monomer. Part of a complex composed of SLC40A1/ferroportin, TF/transferrin and HEPH/hephaestin that transfers iron from cells to transferrin. As to expression, expressed by the liver and secreted in plasma.

It localises to the secreted. Transferrins are iron binding transport proteins which can bind two Fe(3+) ions in association with the binding of an anion, usually bicarbonate. It is responsible for the transport of iron from sites of absorption and heme degradation to those of storage and utilization. Serum transferrin may also have a further role in stimulating cell proliferation. This chain is Serotransferrin (TF), found in Equus caballus (Horse).